Reading from the N-terminus, the 277-residue chain is Cell division protein ZipA (277 aa).

Topologically, residues 1–5 (MQDLR) are periplasmic. A helical transmembrane segment spans residues 6-26 (LMLLLFGVITIIVLFLHGVWA). The Cytoplasmic portion of the chain corresponds to 27-277 (RRKERSALFY…NALIRSTPHL (251 aa)). Positions 120–139 (QKKSDDLSHQSKETHHPSIQ) are disordered.

It belongs to the ZipA family. As to quaternary structure, interacts with FtsZ via their C-terminal domains.

It localises to the cell inner membrane. In terms of biological role, essential cell division protein that stabilizes the FtsZ protofilaments by cross-linking them and that serves as a cytoplasmic membrane anchor for the Z ring. Also required for the recruitment to the septal ring of downstream cell division proteins. This is Cell division protein ZipA from Hamiltonella defensa subsp. Acyrthosiphon pisum (strain 5AT).